A 316-amino-acid polypeptide reads, in one-letter code: MVTQALLPSGLVASAVVAASSANLGPGFDSVGLALSLYDEIIVETTDSGLTVTVDGEGGDQVPLGPEHLVVRAVQHGLQAAGVSAAGLAVRCRNAIPHSRGLGSSAAAVVGGLAAVNGLVVQTDSSPSSDAELIQLASEFEGHPDNAAAAVLGGAVVSWTDHSGDRPNYSAVSLRLHPDIRLFTAIPEQRSSTAETRVLLPAQVSHDDARFNVSRAALLVVALTERPDLLMAATEDLLHQPQRAAAMTASAEYLRLLRRHNVAAALSGAGPSLIALSTDSELPTDAVEFGAAKGFAVTELTVGEAVRWSPTVRVPG.

97–107 (PHSRGLGSSAA) contributes to the ATP binding site.

Belongs to the GHMP kinase family. Homoserine kinase subfamily.

Its subcellular location is the cytoplasm. The enzyme catalyses L-homoserine + ATP = O-phospho-L-homoserine + ADP + H(+). Its pathway is amino-acid biosynthesis; L-threonine biosynthesis; L-threonine from L-aspartate: step 4/5. In terms of biological role, catalyzes the ATP-dependent phosphorylation of L-homoserine to L-homoserine phosphate. The chain is Homoserine kinase from Mycobacterium tuberculosis (strain ATCC 25618 / H37Rv).